A 1083-amino-acid polypeptide reads, in one-letter code: RecBCD enzyme subunit RecB (1083 aa).

One can recognise a UvrD-like helicase ATP-binding domain in the interval 1-323 (MKVFDLLGPL…QTLGTNWRSD (323 aa)). The tract at residues 1–704 (MKVFDLLGPL…RGRAPGEAIV (704 aa)) is DNA-binding and helicase activity, interacts with RecC. 21–28 (ASAGTGKT) is an ATP binding site. Residues 349 to 607 (VQARHQGHRL…QIMTVWVSKG (259 aa)) enclose the UvrD-like helicase C-terminal domain. Residues 765-1083 (AWKRTSYSGL…LSKLLDAEAP (319 aa)) are nuclease activity, interacts with RecD and RecA. The Mg(2+) site is built by H830, D962, and D975. The For nuclease activity role is filled by D975.

This sequence belongs to the helicase family. UvrD subfamily. As to quaternary structure, heterotrimer of RecB, RecC and RecD. All subunits contribute to DNA-binding. Interacts with RecA. It depends on Mg(2+) as a cofactor.

The catalysed reaction is Exonucleolytic cleavage (in the presence of ATP) in either 5'- to 3'- or 3'- to 5'-direction to yield 5'-phosphooligonucleotides.. It carries out the reaction Couples ATP hydrolysis with the unwinding of duplex DNA by translocating in the 3'-5' direction.. The enzyme catalyses ATP + H2O = ADP + phosphate + H(+). Functionally, a helicase/nuclease that prepares dsDNA breaks (DSB) for recombinational DNA repair. Binds to DSBs and unwinds DNA via a highly rapid and processive ATP-dependent bidirectional helicase activity. Holoenzyme degrades any linearized DNA that is unable to undergo homologous recombination. In the holoenzyme this subunit contributes DNA-dependent ATPase activity, exonuclease activity and 3'-5' helicase activity. Unlike the case in E.coli, suppresses RecA-dependent homologous recombination, is instead required for single-strand annealing pathway repair of DSB. The protein is RecBCD enzyme subunit RecB of Mycolicibacterium smegmatis (strain ATCC 700084 / mc(2)155) (Mycobacterium smegmatis).